A 34-amino-acid chain; its full sequence is SCASRCKGHCRARRCGYYVSVLYRGRCYCKCLRC.

4 cysteine pairs are disulfide-bonded: cysteine 2–cysteine 27, cysteine 6–cysteine 29, cysteine 10–cysteine 31, and cysteine 15–cysteine 34.

The protein localises to the secreted. Its function is as follows. Has antibacterial and antiviral activity. In Mytilus edulis (Blue mussel), this protein is Mytilin-B.